We begin with the raw amino-acid sequence, 274 residues long: Imidazole glycerol phosphate synthase subunit HisF (274 aa).

Residues D11 and D134 contribute to the active site.

It belongs to the HisA/HisF family. In terms of assembly, heterodimer of HisH and HisF.

The protein resides in the cytoplasm. It carries out the reaction 5-[(5-phospho-1-deoxy-D-ribulos-1-ylimino)methylamino]-1-(5-phospho-beta-D-ribosyl)imidazole-4-carboxamide + L-glutamine = D-erythro-1-(imidazol-4-yl)glycerol 3-phosphate + 5-amino-1-(5-phospho-beta-D-ribosyl)imidazole-4-carboxamide + L-glutamate + H(+). It functions in the pathway amino-acid biosynthesis; L-histidine biosynthesis; L-histidine from 5-phospho-alpha-D-ribose 1-diphosphate: step 5/9. In terms of biological role, IGPS catalyzes the conversion of PRFAR and glutamine to IGP, AICAR and glutamate. The HisF subunit catalyzes the cyclization activity that produces IGP and AICAR from PRFAR using the ammonia provided by the HisH subunit. In Methanobrevibacter smithii (strain ATCC 35061 / DSM 861 / OCM 144 / PS), this protein is Imidazole glycerol phosphate synthase subunit HisF.